The chain runs to 34 residues: Conotoxin de13a (34 aa).

4-hydroxyproline occurs at positions 3 and 7. 6'-bromotryptophan is present on W14. Residue K18 is modified to 5-hydroxylysine. P21 bears the 4-hydroxyproline mark. Position 25 is a 5-hydroxylysine (K25). Histidine amide is present on H32.

Post-translationally, contains 4 disulfide bonds. The diastereomeric form of 5-hydroxylysine found was not conclusively established, but it is probably 5R. In terms of tissue distribution, expressed by the venom duct.

It localises to the secreted. The protein is Conotoxin de13a of Conasprella delessertii (Sozon's cone).